The chain runs to 158 residues: 6,7-dimethyl-8-ribityllumazine synthase (158 aa).

5-amino-6-(D-ribitylamino)uracil is bound by residues F24, 58–60 (AFE), and 82–84 (AVI). Position 87 to 88 (87 to 88 (GT)) interacts with (2S)-2-hydroxy-3-oxobutyl phosphate. The active-site Proton donor is the H90. 5-amino-6-(D-ribitylamino)uracil is bound at residue F115. Position 129 (R129) interacts with (2S)-2-hydroxy-3-oxobutyl phosphate.

Belongs to the DMRL synthase family. As to quaternary structure, forms an icosahedral capsid composed of 60 subunits, arranged as a dodecamer of pentamers.

The enzyme catalyses (2S)-2-hydroxy-3-oxobutyl phosphate + 5-amino-6-(D-ribitylamino)uracil = 6,7-dimethyl-8-(1-D-ribityl)lumazine + phosphate + 2 H2O + H(+). It functions in the pathway cofactor biosynthesis; riboflavin biosynthesis; riboflavin from 2-hydroxy-3-oxobutyl phosphate and 5-amino-6-(D-ribitylamino)uracil: step 1/2. In terms of biological role, catalyzes the formation of 6,7-dimethyl-8-ribityllumazine by condensation of 5-amino-6-(D-ribitylamino)uracil with 3,4-dihydroxy-2-butanone 4-phosphate. This is the penultimate step in the biosynthesis of riboflavin. The chain is 6,7-dimethyl-8-ribityllumazine synthase from Pseudomonas paraeruginosa (strain DSM 24068 / PA7) (Pseudomonas aeruginosa (strain PA7)).